Consider the following 295-residue polypeptide: UDP-N-acetylenolpyruvoylglucosamine reductase (295 aa).

The region spanning 23–188 (KVGGPADFLA…ISAKFALKPG (166 aa)) is the FAD-binding PCMH-type domain. The active site involves R167. Residue S217 is the Proton donor of the active site. Residue E287 is part of the active site.

The protein belongs to the MurB family. It depends on FAD as a cofactor.

It localises to the cytoplasm. It carries out the reaction UDP-N-acetyl-alpha-D-muramate + NADP(+) = UDP-N-acetyl-3-O-(1-carboxyvinyl)-alpha-D-glucosamine + NADPH + H(+). It participates in cell wall biogenesis; peptidoglycan biosynthesis. In terms of biological role, cell wall formation. The protein is UDP-N-acetylenolpyruvoylglucosamine reductase of Streptococcus pyogenes serotype M3 (strain ATCC BAA-595 / MGAS315).